The primary structure comprises 370 residues: Lysophosphatidic acid receptor 4 (370 aa).

Residues 1–43 (MGDRRFIDFQFQDLNSSLRPRLGNATANNTCIVDDSFKYNLNG) are Extracellular-facing. 3 N-linked (GlcNAc...) asparagine glycosylation sites follow: asparagine 15, asparagine 24, and asparagine 28. The helical transmembrane segment at 44–64 (AVYSVVFILGLITNSASLFVF) threads the bilayer. At 65–73 (CFRMKMRSE) the chain is on the cytoplasmic side. The helical transmembrane segment at 74–94 (TAIFITNLALSDLLFVCTLPF) threads the bilayer. Residues 95 to 112 (KIFYNFNRHWPFGDTLCK) are Extracellular-facing. A disulfide bridge links cysteine 111 with cysteine 188. Residues 113-133 (ISGTAFLTNIYGSMLFLTCIS) form a helical membrane-spanning segment. At 134–155 (VDRFLAIVYPFRSRTIRTRRNS) the chain is on the cytoplasmic side. A helical transmembrane segment spans residues 156–176 (AIVCAGVWILVLSGGISASLF). Residues 177 to 203 (STTNVNNATTTCFEGFSKRVWKTYLSK) lie on the Extracellular side of the membrane. The N-linked (GlcNAc...) asparagine glycan is linked to asparagine 183. A helical transmembrane segment spans residues 204–224 (ITIFIEVVGFIIPLILNVSCS). Topologically, residues 225-254 (SVVLRTLRKPATLSQIGTNKKKVLKMITVH) are cytoplasmic. Residues 255–275 (MAVFVVCFVPYNSVLFLYALV) traverse the membrane as a helical segment. Residues 276–294 (RSQAITNCLLERFAKIMYP) are Extracellular-facing. Residues 295–315 (ITLCLATLNCCFDPFIYYFTL) traverse the membrane as a helical segment. Residues 316 to 370 (ESFQKSFYINTHIRMESLFKTETPLTPKPSLPAIQEEVSDQTTNNGGELMLESTF) lie on the Cytoplasmic side of the membrane.

Belongs to the G-protein coupled receptor 1 family.

Its subcellular location is the cell membrane. Receptor for lysophosphatidic acid (LPA), a mediator of diverse cellular activities. Transduces a signal by increasing the intracellular calcium ions and by stimulating adenylyl cyclase activity. The rank order of potency for agonists of this receptor is 1-oleoyl- &gt; 1-stearoyl- &gt; 1-palmitoyl- &gt; 1-myristoyl- &gt; 1-alkyl- &gt; 1-alkenyl-LPA. This Mus musculus (Mouse) protein is Lysophosphatidic acid receptor 4 (Lpar4).